A 113-amino-acid chain; its full sequence is Large ribosomal subunit protein uL22 (113 aa).

It belongs to the universal ribosomal protein uL22 family. Part of the 50S ribosomal subunit.

Its function is as follows. This protein binds specifically to 23S rRNA; its binding is stimulated by other ribosomal proteins, e.g. L4, L17, and L20. It is important during the early stages of 50S assembly. It makes multiple contacts with different domains of the 23S rRNA in the assembled 50S subunit and ribosome. Functionally, the globular domain of the protein is located near the polypeptide exit tunnel on the outside of the subunit, while an extended beta-hairpin is found that lines the wall of the exit tunnel in the center of the 70S ribosome. In Desulforamulus reducens (strain ATCC BAA-1160 / DSM 100696 / MI-1) (Desulfotomaculum reducens), this protein is Large ribosomal subunit protein uL22.